A 239-amino-acid polypeptide reads, in one-letter code: MQERKRVLVKFSGEALAGENGFGIENSILKFIASEIKELIKNQIEVGIVIGGGNIIRGVSAAKGGLIKRTSGDHMGMLATVINAIAIQEALERSGLEVRVQSAIQMEAFCETYIMRRAQRHLEKGRVVVFAAGTGNPYFTTDTTAILRAVEIDADMVIKATKVNGVYDKDPKQFDDAVFLNTLSYDEAMQDNIKVMDDTAIALAKDNKLPIVVCNMFEEGNLLKIIQGDTSLCSIVKNN.

Residue 10–13 (KFSG) participates in ATP binding. The interval 18–23 (GENGFG) is involved in allosteric activation by GTP. Gly-52 contributes to the UMP binding site. ATP is bound by residues Gly-53 and Arg-57. UMP is bound by residues Asp-73 and 134 to 141 (TGNPYFTT). Positions 161, 167, and 170 each coordinate ATP.

It belongs to the UMP kinase family. Homohexamer.

Its subcellular location is the cytoplasm. The enzyme catalyses UMP + ATP = UDP + ADP. It functions in the pathway pyrimidine metabolism; CTP biosynthesis via de novo pathway; UDP from UMP (UMPK route): step 1/1. Allosterically activated by GTP. Inhibited by UTP. Catalyzes the reversible phosphorylation of UMP to UDP. The sequence is that of Uridylate kinase from Campylobacter jejuni subsp. doylei (strain ATCC BAA-1458 / RM4099 / 269.97).